Here is a 361-residue protein sequence, read N- to C-terminus: PTI1-like tyrosine-protein kinase 1 (361 aa).

Positions glutamate 16–glutamate 43 are disordered. In terms of domain architecture, Protein kinase spans phenylalanine 68–leucine 350. ATP contacts are provided by residues isoleucine 74–valine 82 and lysine 96. The active-site Proton acceptor is the aspartate 200.

The protein belongs to the protein kinase superfamily. Tyr protein kinase family. Interacts with OXI1. Post-translationally, autophosphorylated and phosphorylated by OXI1.

It localises to the cell membrane. It catalyses the reaction L-tyrosyl-[protein] + ATP = O-phospho-L-tyrosyl-[protein] + ADP + H(+). The protein is PTI1-like tyrosine-protein kinase 1 (PTI11) of Arabidopsis thaliana (Mouse-ear cress).